The chain runs to 270 residues: Undecaprenyl-diphosphatase (270 aa).

Helical transmembrane passes span 3 to 23 (TIVT…LPVS), 42 to 62 (WAMF…VQYW), 86 to 106 (LLAA…YIDV), 108 to 128 (LGSP…ILVI), 184 to 204 (AEFS…LELL), 217 to 237 (VGWS…LAVI), and 249 to 269 (FKPF…WLAM).

Belongs to the UppP family.

The protein resides in the cell inner membrane. The enzyme catalyses di-trans,octa-cis-undecaprenyl diphosphate + H2O = di-trans,octa-cis-undecaprenyl phosphate + phosphate + H(+). Functionally, catalyzes the dephosphorylation of undecaprenyl diphosphate (UPP). Confers resistance to bacitracin. This chain is Undecaprenyl-diphosphatase, found in Novosphingobium aromaticivorans (strain ATCC 700278 / DSM 12444 / CCUG 56034 / CIP 105152 / NBRC 16084 / F199).